A 133-amino-acid polypeptide reads, in one-letter code: Small ribosomal subunit protein uS8 (133 aa).

It belongs to the universal ribosomal protein uS8 family. In terms of assembly, part of the 30S ribosomal subunit.

Its function is as follows. One of the primary rRNA binding proteins, it binds directly to 16S rRNA central domain where it helps coordinate assembly of the platform of the 30S subunit. The polypeptide is Small ribosomal subunit protein uS8 (Metallosphaera sedula (strain ATCC 51363 / DSM 5348 / JCM 9185 / NBRC 15509 / TH2)).